The sequence spans 84 residues: UPF0457 protein BCE33L2961 (84 aa).

It belongs to the UPF0457 family.

The chain is UPF0457 protein BCE33L2961 from Bacillus cereus (strain ZK / E33L).